A 176-amino-acid chain; its full sequence is Calcineurin subunit B type 2 (176 aa).

Gly2 carries N-myristoyl glycine lipidation. 4 consecutive EF-hand domains span residues 18-53 (DEIK…QQNP), 57-85 (RVID…FSVK), 87-122 (DEEQ…MVGN), and 128-163 (QLQQ…MEIH). Asp31, Asp33, Ser35, Ser37, Glu42, Asp63, Asp65, Asn67, Glu69, Glu74, Asp100, Asp102, Asp104, and Glu111 together coordinate Ca(2+). The segment at 131–136 (QLVDKS) is calcineurin A binding. Ca(2+) contacts are provided by Asp141, Asp143, Asp145, Arg147, and Glu152.

Belongs to the calcineurin regulatory subunit family. As to quaternary structure, forms a complex composed of a calmodulin-dependent catalytic subunit (also known as calcineurin A) and a regulatory Ca(2+)-binding subunit (also known as calcineurin B). There are three catalytic subunits, each encoded by a separate gene (PPP3CA, PPP3CB, and PPP3CC) and two regulatory subunits which are also encoded by separate genes (PPP3R1 and PPP3R2). Interacts with SPATA33 (via PQIIIT motif). As to expression, testis specific.

It is found in the mitochondrion. Functionally, regulatory subunit of calcineurin, a calcium-dependent, calmodulin stimulated protein phosphatase. Confers calcium sensitivity. This Rattus norvegicus (Rat) protein is Calcineurin subunit B type 2 (Ppp3r2).